A 651-amino-acid chain; its full sequence is Receptor-like serine/threonine-protein kinase At4g25390 (651 aa).

Positions 1 to 25 (MPSRSISAPVPVLAPAPIVSSLVPA) are cleaved as a signal peptide. The Extracellular portion of the chain corresponds to 26–40 (APSGHQNKTTRIFPP). The N-linked (GlcNAc...) asparagine glycan is linked to Asn-32. Residues 41–61 (FVVAGAGAGFSLFITLSVCFC) traverse the membrane as a helical segment. Over 62-651 (KFSRKRSSPP…PLKTTRKQRR (590 aa)) the chain is Cytoplasmic. A disordered region spans residues 66-87 (KRSSPPAENASSSPRRPSPREF). The segment covering 69-87 (SPPAENASSSPRRPSPREF) has biased composition (low complexity). In terms of domain architecture, Protein kinase spans 99 to 633 (FSQANRLGQG…LKGEVNLPEL (535 aa)). ATP contacts are provided by residues 105-113 (LGQGGFGVV) and Lys-127. The active-site Proton acceptor is the Asp-225.

The protein belongs to the protein kinase superfamily. Ser/Thr protein kinase family.

The protein localises to the cell membrane. It catalyses the reaction L-seryl-[protein] + ATP = O-phospho-L-seryl-[protein] + ADP + H(+). It carries out the reaction L-threonyl-[protein] + ATP = O-phospho-L-threonyl-[protein] + ADP + H(+). The polypeptide is Receptor-like serine/threonine-protein kinase At4g25390 (Arabidopsis thaliana (Mouse-ear cress)).